The chain runs to 199 residues: Charged multivesicular body protein 1b (199 aa).

Coiled coils occupy residues 10-30 (NLKF…KEEK) and 178-199 (TSVA…RDQV). The tract at residues 167–199 (ELPQGQTGSVGTSVASAEQDELSQRLAKLRDQV) is disordered. The segment covering 170–182 (QGQTGSVGTSVAS) has biased composition (polar residues). Residues 186-196 (DELSQRLAKLR) carry the MIT-interacting motif motif.

It belongs to the SNF7 family. In terms of assembly, probable peripherally associated component of the endosomal sorting required for transport complex III (ESCRT-III).

It localises to the cytoplasm. The protein localises to the cytosol. The protein resides in the endosome. It is found in the late endosome membrane. Its function is as follows. Probable peripherally associated component of the endosomal sorting required for transport complex III (ESCRT-III) which is involved in multivesicular bodies (MVBs) formation and sorting of endosomal cargo proteins into MVBs. MVBs contain intraluminal vesicles (ILVs) that are generated by invagination and scission from the limiting membrane of the endosome and mostly are delivered to lysosomes enabling degradation of membrane proteins, such as stimulated growth factor receptors, lysosomal enzymes and lipids. The polypeptide is Charged multivesicular body protein 1b (chmp1b) (Danio rerio (Zebrafish)).